Consider the following 259-residue polypeptide: MVEKMIDKQLMQKRFSERATTYDRFANVQKKMAHALMKRIVHPPQTILEIGCGTGYLTKLLHDAYPKAELTAVDIAPGMIEKAKQRLGDAPITWLCADIEEAELYEMYDLIISNATFQWLTAPKQTIAKLAKQRNERGQLLFSTFGDRTFHELHTSFAYALAIQQIDEPLRIGPSFPTFSEWLAMHDQARGHEQFEVEYFPSVRDFFLSLRHIGATNSTSGRYCQRPSVFKAMMHEYEQRFSEQGLIRATYHCIFIDIT.

The protein belongs to the methyltransferase superfamily.

It catalyses the reaction malonyl-[ACP] + S-adenosyl-L-methionine = malonyl-[ACP] methyl ester + S-adenosyl-L-homocysteine. It functions in the pathway cofactor biosynthesis; biotin biosynthesis. Converts the free carboxyl group of a malonyl-thioester to its methyl ester by transfer of a methyl group from S-adenosyl-L-methionine (SAM). It allows to synthesize pimeloyl-ACP via the fatty acid synthetic pathway. The chain is Malonyl-[acyl-carrier protein] O-methyltransferase from Anoxybacillus flavithermus (strain DSM 21510 / WK1).